Consider the following 211-residue polypeptide: Large ribosomal subunit protein uL4 (211 aa).

Residues Q40–T80 form a disordered region. Positions Q41–R54 are enriched in polar residues. Basic residues predominate over residues G60 to G71.

Belongs to the universal ribosomal protein uL4 family. In terms of assembly, part of the 50S ribosomal subunit.

One of the primary rRNA binding proteins, this protein initially binds near the 5'-end of the 23S rRNA. It is important during the early stages of 50S assembly. It makes multiple contacts with different domains of the 23S rRNA in the assembled 50S subunit and ribosome. In terms of biological role, forms part of the polypeptide exit tunnel. This chain is Large ribosomal subunit protein uL4, found in Prochlorococcus marinus (strain MIT 9211).